The following is a 350-amino-acid chain: Protein Wnt-2 (350 aa).

A signal peptide spans 1-25 (MNFLPNGICFYLSVAICWFSSRVDA). 11 disulfide bridges follow: Cys-74–Cys-85, Cys-125–Cys-133, Cys-135–Cys-155, Cys-204–Cys-218, Cys-206–Cys-213, Cys-276–Cys-307, Cys-292–Cys-302, Cys-306–Cys-346, Cys-322–Cys-337, Cys-324–Cys-334, and Cys-329–Cys-330. An N-linked (GlcNAc...) asparagine glycan is attached at Asn-132. A lipid anchor (O-palmitoleoyl serine; by PORCN) is attached at Ser-210. An N-linked (GlcNAc...) asparagine glycan is attached at Asn-293.

It belongs to the Wnt family. Post-translationally, palmitoleoylation is required for efficient binding to frizzled receptors. Depalmitoleoylation leads to Wnt signaling pathway inhibition.

The protein resides in the secreted. It is found in the extracellular space. Its subcellular location is the extracellular matrix. In terms of biological role, ligand for members of the frizzled family of seven transmembrane receptors. Functions in the canonical Wnt signaling pathway that results in activation of transcription factors of the TCF/LEF family. In Danio rerio (Zebrafish), this protein is Protein Wnt-2 (wnt2).